We begin with the raw amino-acid sequence, 142 residues long: Large ribosomal subunit protein bL17 (142 aa).

The protein belongs to the bacterial ribosomal protein bL17 family. Part of the 50S ribosomal subunit. Contacts protein L32.

The chain is Large ribosomal subunit protein bL17 from Chlamydia felis (strain Fe/C-56) (Chlamydophila felis).